The primary structure comprises 70 residues: MAHSLLSCNGIPNFNPLSIKDSNIKRTKAGPEPTKAVAASMFFSGSSTYLPTWLINSLTSGFCSLETSAE.

This is an uncharacterized protein from Saccharomyces cerevisiae (strain ATCC 204508 / S288c) (Baker's yeast).